The primary structure comprises 158 residues: Anaerobic nitrite reductase AHB2 (158 aa).

Residues 5–154 (GFTEKQEALV…LALAIKTEMK (150 aa)) form the Globin domain. A Homodimerization motif is present at residues 38-42 (EIAPA). The heme b site is built by serine 48, lysine 62, histidine 66, and histidine 101. The short motif at 108–120 (DPHFEVVKEALLR) is the Homodimerization element.

This sequence belongs to the plant globin family. In terms of assembly, unable to dimerize. The cofactor is heme b. As to expression, expressed in rosette leaves but not in roots.

It is found in the cytoplasm. Its subcellular location is the nucleus. It carries out the reaction Fe(III)-heme b-[protein] + nitric oxide + H2O = Fe(II)-heme b-[protein] + nitrite + 2 H(+). Phytoglobin that reduces nitrite to nitric oxide (NO) under anoxic conditions (e.g. during flooding or in waterlogged soil). May not function as an oxygen storage or transport protein. Has an unusually high affinity for O(2) through an hexacoordinate heme iron because of a very low dissociation constant. This is Anaerobic nitrite reductase AHB2 from Arabidopsis thaliana (Mouse-ear cress).